The primary structure comprises 118 residues: Membrane-anchored ubiquitin-fold protein 3 (118 aa).

Positions 7–73 constitute a Ubiquitin-like domain; the sequence is IDIKFRLYDG…LENNKTVGQC (67 aa). C113 carries the S-palmitoyl cysteine lipid modification. C115 is subject to Cysteine methyl ester. A lipid anchor (S-geranylgeranyl cysteine) is attached at C115. A propeptide spans 116-118 (removed in mature form); that stretch reads TIL.

As to expression, ubiquitous, but three fold higher expression in senescing leaves.

It localises to the cell membrane. Its function is as follows. May serve as docking site to facilitate the association of other proteins to the plasma membrane. The protein is Membrane-anchored ubiquitin-fold protein 3 (MUB3) of Arabidopsis thaliana (Mouse-ear cress).